Consider the following 73-residue polypeptide: U-scoloptoxin(15)-Sm3a (73 aa).

A signal peptide spans 1 to 23 (MERKVFLLLFVIVLLTLPGFMSA).

The protein belongs to the scoloptoxin-15 family. Post-translationally, contains 2 disulfide bonds. Expressed by the venom gland.

Its subcellular location is the secreted. This Scolopendra morsitans (Tanzanian blue ringleg centipede) protein is U-scoloptoxin(15)-Sm3a.